Consider the following 282-residue polypeptide: ATP phosphoribosyltransferase (282 aa).

This sequence belongs to the ATP phosphoribosyltransferase family. Long subfamily. Requires Mg(2+) as cofactor.

The protein localises to the cytoplasm. It catalyses the reaction 1-(5-phospho-beta-D-ribosyl)-ATP + diphosphate = 5-phospho-alpha-D-ribose 1-diphosphate + ATP. Its pathway is amino-acid biosynthesis; L-histidine biosynthesis; L-histidine from 5-phospho-alpha-D-ribose 1-diphosphate: step 1/9. With respect to regulation, feedback inhibited by histidine. Its function is as follows. Catalyzes the condensation of ATP and 5-phosphoribose 1-diphosphate to form N'-(5'-phosphoribosyl)-ATP (PR-ATP). Has a crucial role in the pathway because the rate of histidine biosynthesis seems to be controlled primarily by regulation of HisG enzymatic activity. The polypeptide is ATP phosphoribosyltransferase (Saccharopolyspora erythraea (strain ATCC 11635 / DSM 40517 / JCM 4748 / NBRC 13426 / NCIMB 8594 / NRRL 2338)).